Consider the following 62-residue polypeptide: Protein A37.5 homolog (62 aa).

It belongs to the orthopoxviruses A37.5 protein family.

This chain is Protein A37.5 homolog (A40_5R), found in Homo sapiens (Human).